The following is a 323-amino-acid chain: Serine/threonine-protein phosphatase PP1-gamma catalytic subunit (323 aa).

A2 carries the post-translational modification N-acetylalanine. Mn(2+)-binding residues include D64, H66, D92, and N124. H125 serves as the catalytic Proton donor. Mn(2+)-binding residues include H173 and H248. A disordered region spans residues K302–K323. Phosphothreonine occurs at positions 307 and 311.

Belongs to the PPP phosphatase family. PP-1 subfamily. In terms of assembly, PP1 comprises a catalytic subunit, PPP1CA, PPP1CB or PPP1CC, which is folded into its native form by inhibitor 2 and glycogen synthetase kinase 3, and then complexed to one or several targeting or regulatory subunits. PPP1R12A, PPP1R12B and PPP1R12C mediate binding to myosin. PPP1R3A (in skeletal muscle), PPP1R3B (in sliver), PPP1R3C, PPP1R3D and PPP1R3F (in brain) mediate binding to glycogen. PPP1R15A and PPP1R15B mediate binding to EIF2S1. Part of a complex containing PPP1R15B, PP1 and NCK1/2. Interacts with PPP1R3B, PPP1R7 and CDCA2. Isoform 2 interacts with SPZ1. Interacts with IKFZ1; the interaction targets PPP1CC to pericentromeric heterochromatin, dephosphorylates IKAROS, stabilizes it and prevents it from degradation. Interacts with NOM1 and PPP1R8. Component of the PTW/PP1 phosphatase complex, composed of PPP1R10/PNUTS, TOX4, WDR82, and PPP1CA or PPP1CB or PPP1CC. Interacts with PPP1R8. Interacts with NEK2. Interacts with URI1; the interaction is phosphorylation-dependent and occurs in a growth factor-dependent manner. Interacts with FOXP3. Interacts with TMEM225 (via RVxF motif). Interacts with MKI67. Interacts with RRP1B; this targets PPP1CC to the nucleolus. Found in a complex with PPP1CA, PPP1CC, SHC1 and PEAK1. Interacts with DYNLT4. Interacts (via RVxF motif) with FIRRM; regulates PLK1 kinase activity. Interacts with the KNL1 complex subunit KNL1; the interaction is direct and mutually exclusive with KNL1 binding to microtubules. Component of the SHOC2-MRAS-PP1c (SMP) complex consisting of SHOC2, GTP-bound M-Ras/MRAS and the catalytic subunit of protein phosphatase 1 (either PPP1CA, PPP1CB or PPP1CC). SHOC2 and PP1c preferably bind M-Ras/MRAS, but they also bind K-Ras/KRAS, N-Ras/NRAS and H-Ras/HRAS; these interactions are GTP-dependent and both SHOC2 and PP1c are required to form a stable complex. Interacts with SHOC2 in the absence of Ras GTPases. It depends on Mn(2+) as a cofactor. Phosphorylated by NEK2. As to expression, isoform 2 is expressed only in testis, in the late spermatocytes and early spematids (at protein level).

It is found in the cytoplasm. The protein localises to the nucleus. The protein resides in the cleavage furrow. Its subcellular location is the nucleolus. It localises to the nucleoplasm. It is found in the chromosome. The protein localises to the centromere. The protein resides in the kinetochore. Its subcellular location is the nucleus speckle. It localises to the midbody. It is found in the mitochondrion. The protein localises to the cytoskeleton. The protein resides in the microtubule organizing center. It carries out the reaction O-phospho-L-seryl-[protein] + H2O = L-seryl-[protein] + phosphate. It catalyses the reaction O-phospho-L-threonyl-[protein] + H2O = L-threonyl-[protein] + phosphate. With respect to regulation, inactivated by binding to URI1. Protein phosphatase that associates with over 200 regulatory proteins to form highly specific holoenzymes which dephosphorylate hundreds of biological targets. Protein phosphatase 1 (PP1) is essential for cell division, and participates in the regulation of glycogen metabolism, muscle contractility and protein synthesis. Dephosphorylates RPS6KB1. Involved in regulation of ionic conductances and long-term synaptic plasticity. May play an important role in dephosphorylating substrates such as the postsynaptic density-associated Ca(2+)/calmodulin dependent protein kinase II. Component of the PTW/PP1 phosphatase complex, which plays a role in the control of chromatin structure and cell cycle progression during the transition from mitosis into interphase. In balance with CSNK1D and CSNK1E, determines the circadian period length, through the regulation of the speed and rhythmicity of PER1 and PER2 phosphorylation. May dephosphorylate CSNK1D and CSNK1E. Regulates the recruitment of the SKA complex to kinetochores. Core component of the SHOC2-MRAS-PP1c (SMP) holophosphatase complex that regulates the MAPK pathway activation. Dephosphorylates MKI67 at the onset of anaphase. The SMP complex specifically dephosphorylates the inhibitory phosphorylation at 'Ser-259' of RAF1 kinase, 'Ser-365' of BRAF kinase and 'Ser-214' of ARAF kinase, stimulating their kinase activities. The SMP complex enhances the dephosphorylation activity and substrate specificity of PP1c. In terms of biological role, required for normal male fertility. This chain is Serine/threonine-protein phosphatase PP1-gamma catalytic subunit (Ppp1cc), found in Rattus norvegicus (Rat).